A 68-amino-acid chain; its full sequence is Conotoxin TsMMSK-021 (68 aa).

Residues 1–20 (MMSKLGVLLTICLLLFPLTA) form the signal peptide. Residues 21–52 (VRLDGDQHTDRPADRMQDIATEQHPLFDPVKR) constitute a propeptide that is removed on maturation. 3 cysteine pairs are disulfide-bonded: Cys-53–Cys-66, Cys-54–Cys-62, and Cys-58–Cys-65. The residue at position 64 (Pro-64) is a 4-hydroxyproline.

Belongs to the conotoxin M superfamily. In terms of tissue distribution, expressed by the venom duct.

Its subcellular location is the secreted. This is Conotoxin TsMMSK-021 from Conus tessulatus (Tessellate cone).